The chain runs to 448 residues: Tubulin beta-1 chain (448 aa).

8 residues coordinate GTP: Q11, E69, S138, G142, T143, G144, N204, and N226. A Mg(2+)-binding site is contributed by E69. Residues 427-448 (DATADEEGDLQEGESEYIEQEE) are disordered. The segment covering 429–448 (TADEEGDLQEGESEYIEQEE) has biased composition (acidic residues).

Belongs to the tubulin family. In terms of assembly, dimer of alpha and beta chains. A typical microtubule is a hollow water-filled tube with an outer diameter of 25 nm and an inner diameter of 15 nM. Alpha-beta heterodimers associate head-to-tail to form protofilaments running lengthwise along the microtubule wall with the beta-tubulin subunit facing the microtubule plus end conferring a structural polarity. Microtubules usually have 13 protofilaments but different protofilament numbers can be found in some organisms and specialized cells. It depends on Mg(2+) as a cofactor.

The protein resides in the cytoplasm. The protein localises to the cytoskeleton. Its function is as follows. Tubulin is the major constituent of microtubules, a cylinder consisting of laterally associated linear protofilaments composed of alpha- and beta-tubulin heterodimers. Microtubules grow by the addition of GTP-tubulin dimers to the microtubule end, where a stabilizing cap forms. Below the cap, tubulin dimers are in GDP-bound state, owing to GTPase activity of alpha-tubulin. The chain is Tubulin beta-1 chain from Brugia pahangi (Filarial nematode worm).